We begin with the raw amino-acid sequence, 183 residues long: Nascent polypeptide-associated complex subunit beta (183 aa).

The NAC-A/B domain occupies 62–127 (GADDKKLQTT…GEEKELTELV (66 aa)). The segment at 150–183 (QNMQKQAGTEGKKDEDEDDIPDLVEGENFESNVE) is disordered. Acidic residues predominate over residues 164–183 (EDEDDIPDLVEGENFESNVE).

It belongs to the NAC-beta family. In terms of assembly, part of the nascent polypeptide-associated complex (NAC), consisting of egd2 and egd1. NAC associates with ribosomes via egd1.

It is found in the cytoplasm. It localises to the nucleus. Functionally, component of the nascent polypeptide-associated complex (NAC), a dynamic component of the ribosomal exit tunnel, protecting the emerging polypeptides from interaction with other cytoplasmic proteins to ensure appropriate nascent protein targeting. The NAC complex also promotes mitochondrial protein import by enhancing productive ribosome interactions with the outer mitochondrial membrane and blocks the inappropriate interaction of ribosomes translating non-secretory nascent polypeptides with translocation sites in the membrane of the endoplasmic reticulum. EGD1 may act as a transcription factor that exert a negative effect on the expression of several genes that are transcribed by RNA polymerase II. This Neosartorya fischeri (strain ATCC 1020 / DSM 3700 / CBS 544.65 / FGSC A1164 / JCM 1740 / NRRL 181 / WB 181) (Aspergillus fischerianus) protein is Nascent polypeptide-associated complex subunit beta (egd1).